We begin with the raw amino-acid sequence, 286 residues long: B3 domain-containing protein REM11 (286 aa).

Positions 1–70 (MAWNLAIITL…TPMLSLVSTQ (70 aa)) form a DNA-binding region, TF-B3 1. Residues 68–114 (STQSTSHKSQKRECSKHSEKESISAVPSKGKKNRKARSNREERRDSS) are disordered. Residues 78 to 89 (KRECSKHSEKES) are compositionally biased toward basic and acidic residues. The TF-B3 2 DNA-binding region spans 119–219 (NRFVTFTPED…RAQVCFYGVF (101 aa)).

It is found in the nucleus. This is B3 domain-containing protein REM11 (REM11) from Arabidopsis thaliana (Mouse-ear cress).